The chain runs to 161 residues: Pupal cuticle protein C1B (161 aa).

9 tandem repeats follow at residues 6–9 (AAPA), 14–17 (AAPA), 35–38 (AAPA), 87–90 (AAPV), 103–106 (AAPV), 112–115 (AAPV), 121–124 (AAPV), 130–133 (AAPV), and 143–146 (AAPA).

In terms of biological role, component of the cuticle of the pupa of Tenebrio molitor. The protein is Pupal cuticle protein C1B of Tenebrio molitor (Yellow mealworm beetle).